The sequence spans 481 residues: Replication factor C large subunit (481 aa).

Residue 43 to 50 (GKPGIGKT) coordinates ATP. Composition is skewed to basic and acidic residues over residues 408 to 433 (KVEREKEPEPKKKGRKKAESPAKDAD) and 441 to 457 (VPKEELPVKSAPEERPA). Residues 408 to 481 (KVEREKEPEP…HNQSTLFDGF (74 aa)) form a disordered region. A compositionally biased stretch (polar residues) spans 471-481 (AHNQSTLFDGF).

It belongs to the activator 1 small subunits family. RfcL subfamily. As to quaternary structure, heteromultimer composed of small subunits (RfcS) and large subunits (RfcL).

Part of the RFC clamp loader complex which loads the PCNA sliding clamp onto DNA. This is Replication factor C large subunit from Methanoregula boonei (strain DSM 21154 / JCM 14090 / 6A8).